A 208-amino-acid chain; its full sequence is Glycerol-3-phosphate acyltransferase (208 aa).

The next 6 helical transmembrane spans lie at 7–27 (PNIH…GYLL), 63–83 (MMAA…ILVA), 86–106 (AGMS…GHCF), 123–143 (GVMA…WLVV), 149–169 (ISSL…FLIH), and 170–190 (PEIP…VIFY).

This sequence belongs to the PlsY family. In terms of assembly, probably interacts with PlsX.

The protein resides in the cell inner membrane. It carries out the reaction an acyl phosphate + sn-glycerol 3-phosphate = a 1-acyl-sn-glycero-3-phosphate + phosphate. It participates in lipid metabolism; phospholipid metabolism. In terms of biological role, catalyzes the transfer of an acyl group from acyl-phosphate (acyl-PO(4)) to glycerol-3-phosphate (G3P) to form lysophosphatidic acid (LPA). This enzyme utilizes acyl-phosphate as fatty acyl donor, but not acyl-CoA or acyl-ACP. The sequence is that of Glycerol-3-phosphate acyltransferase from Wolinella succinogenes (strain ATCC 29543 / DSM 1740 / CCUG 13145 / JCM 31913 / LMG 7466 / NCTC 11488 / FDC 602W) (Vibrio succinogenes).